Consider the following 99-residue polypeptide: DNA-directed RNA polymerase subunit omega (99 aa).

It belongs to the RNA polymerase subunit omega family. As to quaternary structure, the RNAP catalytic core consists of 2 alpha, 1 beta, 1 beta' and 1 omega subunit. When a sigma factor is associated with the core the holoenzyme is formed, which can initiate transcription.

It catalyses the reaction RNA(n) + a ribonucleoside 5'-triphosphate = RNA(n+1) + diphosphate. Its function is as follows. Promotes RNA polymerase assembly. Latches the N- and C-terminal regions of the beta' subunit thereby facilitating its interaction with the beta and alpha subunits. This is DNA-directed RNA polymerase subunit omega from Deinococcus geothermalis (strain DSM 11300 / CIP 105573 / AG-3a).